Consider the following 370-residue polypeptide: uncharacterized protein (370 aa).

An OBG-type G domain is found at 62 to 293 (ATVALVGFPS…LKERMWRALG (232 aa)). GTP-binding positions include 68-75 (GFPSVGKS), 114-118 (DVPGL), and 243-246 (NKVD). The 76-residue stretch at 293 to 368 (GLIRIYMDKP…EDEDVLRVVA (76 aa)) folds into the TGS domain.

Belongs to the TRAFAC class OBG-HflX-like GTPase superfamily. OBG GTPase family.

This is an uncharacterized protein from Halobacterium salinarum (strain ATCC 700922 / JCM 11081 / NRC-1) (Halobacterium halobium).